A 109-amino-acid polypeptide reads, in one-letter code: Mitochondrial import inner membrane translocase subunit TIM12 (109 aa).

Residue Ser-2 is modified to N-acetylserine. The Twin CX3C motif motif lies at 40–66 (CLEKCIPHEGFGEPDLTKGEQCCIDRC). Cystine bridges form between Cys-40–Cys-66 and Cys-44–Cys-62.

It belongs to the small Tim family. In terms of assembly, component of the TIM22 complex, whose core is composed of TIM18, TIM22 and TIM54, associated with the peripheral proteins MRS5/TIM12 and the 70 kDa heterohexamer composed of TIM9 and TIM10 (or TIM8 and TIM13). Interacts directly with both the TIM22 protein and the TIM9-TIM10 heterohexamer. Interacts with multi-pass transmembrane proteins in transit.

The protein resides in the mitochondrion inner membrane. It localises to the mitochondrion intermembrane space. In terms of biological role, essential component of the TIM22 complex, a complex that mediates the import and insertion of multi-pass transmembrane proteins into the mitochondrial inner membrane. The TIM22 complex forms a twin-pore translocase that uses the membrane potential as external driving force. In the TIM22 complex, it acts as a docking point for the soluble TIM9-TIM10 heterohexamer that guides the target proteins in transit through the aqueous mitochondrial intermembrane space. The protein is Mitochondrial import inner membrane translocase subunit TIM12 (TIM12) of Saccharomyces cerevisiae (strain ATCC 204508 / S288c) (Baker's yeast).